The following is a 253-amino-acid chain: Imidazole glycerol phosphate synthase subunit HisF (253 aa).

Residues Asp-11 and Asp-130 contribute to the active site.

Belongs to the HisA/HisF family. In terms of assembly, heterodimer of HisH and HisF.

The protein localises to the cytoplasm. The enzyme catalyses 5-[(5-phospho-1-deoxy-D-ribulos-1-ylimino)methylamino]-1-(5-phospho-beta-D-ribosyl)imidazole-4-carboxamide + L-glutamine = D-erythro-1-(imidazol-4-yl)glycerol 3-phosphate + 5-amino-1-(5-phospho-beta-D-ribosyl)imidazole-4-carboxamide + L-glutamate + H(+). It functions in the pathway amino-acid biosynthesis; L-histidine biosynthesis; L-histidine from 5-phospho-alpha-D-ribose 1-diphosphate: step 5/9. Functionally, IGPS catalyzes the conversion of PRFAR and glutamine to IGP, AICAR and glutamate. The HisF subunit catalyzes the cyclization activity that produces IGP and AICAR from PRFAR using the ammonia provided by the HisH subunit. The protein is Imidazole glycerol phosphate synthase subunit HisF of Geotalea daltonii (strain DSM 22248 / JCM 15807 / FRC-32) (Geobacter daltonii).